The primary structure comprises 64 residues: Large ribosomal subunit protein bL35 (64 aa).

Residues 17–41 form a disordered region; it reads TGSGKVKRERMNGSHNLEHKNRKRT. A compositionally biased stretch (basic and acidic residues) spans 25–35; it reads ERMNGSHNLEH.

It belongs to the bacterial ribosomal protein bL35 family.

This Chlorobaculum parvum (strain DSM 263 / NCIMB 8327) (Chlorobium vibrioforme subsp. thiosulfatophilum) protein is Large ribosomal subunit protein bL35.